The chain runs to 402 residues: NADH-quinone oxidoreductase subunit D (402 aa).

The protein belongs to the complex I 49 kDa subunit family. NDH-1 is composed of 14 different subunits. Subunits NuoB, C, D, E, F, and G constitute the peripheral sector of the complex.

It localises to the cell inner membrane. The catalysed reaction is a quinone + NADH + 5 H(+)(in) = a quinol + NAD(+) + 4 H(+)(out). Functionally, NDH-1 shuttles electrons from NADH, via FMN and iron-sulfur (Fe-S) centers, to quinones in the respiratory chain. The immediate electron acceptor for the enzyme in this species is believed to be ubiquinone. Couples the redox reaction to proton translocation (for every two electrons transferred, four hydrogen ions are translocated across the cytoplasmic membrane), and thus conserves the redox energy in a proton gradient. The chain is NADH-quinone oxidoreductase subunit D from Protochlamydia amoebophila (strain UWE25).